Consider the following 110-residue polypeptide: PCNA-associated factor (110 aa).

A Glycyl lysine isopeptide (Lys-Gly) (interchain with G-Cter in ubiquitin) cross-link involves residue lysine 15. The D-box motif lies at 23–34; the sequence is RKVLGSSTFVTN. Position 24 is an N6-acetyllysine; alternate (lysine 24). Lysine 24 participates in a covalent cross-link: Glycyl lysine isopeptide (Lys-Gly) (interchain with G-Cter in ubiquitin); alternate. Serine 28 is modified (phosphoserine). Residues 29 to 39 show a composition bias toward low complexity; it reads STFVTNSSGSS. The interval 29 to 110 is disordered; it reads STFVTNSSGS…QPDHRDDENE (82 aa). A PIP-box motif is present at residues 61-71; the sequence is QKGIGEFFRLS. Phosphoserine is present on serine 71. Basic and acidic residues predominate over residues 71 to 80; the sequence is SPKDSKKENQ. The KEN box motif lies at 77–79; sequence KEN. The short motif at 84–96 is the Initiation motif element; that stretch reads EAGSSGLGKAKRK.

In terms of assembly, interacts (when monoubiquitinated at Lys-15 and Lys-24) with PCNA. Interacts with isoform 2/p33ING1b of ING1. Interacts with BRCA1. Monoubiquitinated at Lys-15 and Lys-24 during normal S phase, promoting its association with PCNA. Also diubiquitinated at these 2 sites. Following DNA damage, monoubiquitin chains at Lys-15 and Lys-24 are probably extended, leading to disrupt the interaction with PCNA. Polyubiquitinated by the APC/C complex at the mitotic exit, leading to its degradation by the proteasome.

The protein localises to the nucleus. Its subcellular location is the cytoplasm. It localises to the perinuclear region. Functionally, PCNA-binding protein that acts as a regulator of DNA repair during DNA replication. Following DNA damage, the interaction with PCNA is disrupted, facilitating the interaction between monoubiquitinated PCNA and the translesion DNA synthesis DNA polymerase eta (POLH) at stalled replisomes, facilitating the bypass of replication-fork-blocking lesions. Also acts as a regulator of centrosome number. In Rattus norvegicus (Rat), this protein is PCNA-associated factor.